A 147-amino-acid polypeptide reads, in one-letter code: Large ribosomal subunit protein uL13 (147 aa).

It belongs to the universal ribosomal protein uL13 family. In terms of assembly, part of the 50S ribosomal subunit.

This protein is one of the early assembly proteins of the 50S ribosomal subunit, although it is not seen to bind rRNA by itself. It is important during the early stages of 50S assembly. The sequence is that of Large ribosomal subunit protein uL13 from Kineococcus radiotolerans (strain ATCC BAA-149 / DSM 14245 / SRS30216).